Here is a 225-residue protein sequence, read N- to C-terminus: Octanoyltransferase (225 aa).

Residues 43-225 (GTAPELVWLL…KTFRDVFGRG (183 aa)) form the BPL/LPL catalytic domain. Substrate is bound by residues 82-89 (RGGQYTYH), 157-159 (AIG), and 170-172 (GVS). Catalysis depends on C188, which acts as the Acyl-thioester intermediate.

This sequence belongs to the LipB family.

It localises to the cytoplasm. The catalysed reaction is octanoyl-[ACP] + L-lysyl-[protein] = N(6)-octanoyl-L-lysyl-[protein] + holo-[ACP] + H(+). Its pathway is protein modification; protein lipoylation via endogenous pathway; protein N(6)-(lipoyl)lysine from octanoyl-[acyl-carrier-protein]: step 1/2. Functionally, catalyzes the transfer of endogenously produced octanoic acid from octanoyl-acyl-carrier-protein onto the lipoyl domains of lipoate-dependent enzymes. Lipoyl-ACP can also act as a substrate although octanoyl-ACP is likely to be the physiological substrate. The polypeptide is Octanoyltransferase (Parvibaculum lavamentivorans (strain DS-1 / DSM 13023 / NCIMB 13966)).